Consider the following 312-residue polypeptide: tRNA dimethylallyltransferase (312 aa).

13 to 20 lines the ATP pocket; that stretch reads GPTAAGKT. 15 to 20 lines the substrate pocket; sequence TAAGKT. Interaction with substrate tRNA regions lie at residues 38–41, 162–166, and 244–249; these read DSAM, QRLLR, and RCVGYR.

It belongs to the IPP transferase family. In terms of assembly, monomer. Requires Mg(2+) as cofactor.

It carries out the reaction adenosine(37) in tRNA + dimethylallyl diphosphate = N(6)-dimethylallyladenosine(37) in tRNA + diphosphate. Its function is as follows. Catalyzes the transfer of a dimethylallyl group onto the adenine at position 37 in tRNAs that read codons beginning with uridine, leading to the formation of N6-(dimethylallyl)adenosine (i(6)A). The protein is tRNA dimethylallyltransferase of Chromohalobacter salexigens (strain ATCC BAA-138 / DSM 3043 / CIP 106854 / NCIMB 13768 / 1H11).